Here is a 593-residue protein sequence, read N- to C-terminus: ATP-dependent RNA helicase MRH4, mitochondrial (593 aa).

A mitochondrion-targeting transit peptide spans 1–106 (MFPLRAQSAS…QLRIFPTVRA (106 aa)). Positions 42 to 51 (GANGANRANG) are enriched in low complexity. The segment at 42–63 (GANGANRANGTNSSQPESQSSK) is disordered. The span at 52–63 (TNSSQPESQSSK) shows a compositional bias: polar residues. The Q motif signature appears at 130–137 (VLKPTPIQ). The region spanning 181–399 (INSLQKLKVF…NRIFPTDDSI (219 aa)) is the Helicase ATP-binding domain. 194–201 (AETGSGKT) is an ATP binding site. The DEAD box motif lies at 347–350 (DEAD). The Helicase C-terminal domain occupies 433–593 (ALAQALYAIT…NAVKRGIQMG (161 aa)).

It belongs to the DEAD box helicase family. MRH4 subfamily.

It is found in the mitochondrion. It carries out the reaction ATP + H2O = ADP + phosphate + H(+). Functionally, ATP-binding RNA helicase involved in mitochondrial RNA metabolism. Required for maintenance of mitochondrial DNA. This Scheffersomyces stipitis (strain ATCC 58785 / CBS 6054 / NBRC 10063 / NRRL Y-11545) (Yeast) protein is ATP-dependent RNA helicase MRH4, mitochondrial (MRH4).